A 314-amino-acid chain; its full sequence is Vacuolar membrane protein SCY_4732 (314 aa).

The interval 32–61 (KPTSSVVSETSSKSLPSLTSSAFSTSSGTT) is disordered. Residues 93–113 (VYIAVGAVIGAIFISILIWWL) form a helical membrane-spanning segment. Residues Ser-148, Ser-254, and Ser-274 each carry the phosphoserine modification. Residues 240–309 (EERKLNLNRP…PSMFLDDVLN (70 aa)) form a disordered region. Positions 254 to 269 (SPERKEKKINSMEGYH) are enriched in basic and acidic residues.

It belongs to the PRM5 family.

Its subcellular location is the vacuole membrane. This is Vacuolar membrane protein SCY_4732 from Saccharomyces cerevisiae (strain YJM789) (Baker's yeast).